A 149-amino-acid chain; its full sequence is Endoribonuclease YbeY (149 aa).

Positions 101, 105, and 111 each coordinate Zn(2+).

This sequence belongs to the endoribonuclease YbeY family. It depends on Zn(2+) as a cofactor.

The protein localises to the cytoplasm. Functionally, single strand-specific metallo-endoribonuclease involved in late-stage 70S ribosome quality control and in maturation of the 3' terminus of the 16S rRNA. The protein is Endoribonuclease YbeY of Thermotoga neapolitana (strain ATCC 49049 / DSM 4359 / NBRC 107923 / NS-E).